We begin with the raw amino-acid sequence, 205 residues long: Holliday junction branch migration complex subunit RuvA (205 aa).

Positions 1–67 (MITSIFGKVT…QIIEEAFAFN (67 aa)) are domain I. The domain II stretch occupies residues 68–146 (TLEEKEWFCR…NNKNIKGVQV (79 aa)). The flexible linker stretch occupies residues 147 to 150 (ADGY). Residues 150–205 (YDELFETLKSLGYKQQEIQDALKMIEVKPDFDISQLVAEVIKLMSFKNNEITNKTA) are domain III.

It belongs to the RuvA family. Homotetramer. Forms an RuvA(8)-RuvB(12)-Holliday junction (HJ) complex. HJ DNA is sandwiched between 2 RuvA tetramers; dsDNA enters through RuvA and exits via RuvB. An RuvB hexamer assembles on each DNA strand where it exits the tetramer. Each RuvB hexamer is contacted by two RuvA subunits (via domain III) on 2 adjacent RuvB subunits; this complex drives branch migration. In the full resolvosome a probable DNA-RuvA(4)-RuvB(12)-RuvC(2) complex forms which resolves the HJ.

The protein localises to the cytoplasm. In terms of biological role, the RuvA-RuvB-RuvC complex processes Holliday junction (HJ) DNA during genetic recombination and DNA repair, while the RuvA-RuvB complex plays an important role in the rescue of blocked DNA replication forks via replication fork reversal (RFR). RuvA specifically binds to HJ cruciform DNA, conferring on it an open structure. The RuvB hexamer acts as an ATP-dependent pump, pulling dsDNA into and through the RuvAB complex. HJ branch migration allows RuvC to scan DNA until it finds its consensus sequence, where it cleaves and resolves the cruciform DNA. The protein is Holliday junction branch migration complex subunit RuvA of Mycoplasma genitalium (strain ATCC 33530 / DSM 19775 / NCTC 10195 / G37) (Mycoplasmoides genitalium).